A 541-amino-acid polypeptide reads, in one-letter code: Protein VAPYRIN (541 aa).

The MSP domain maps to 4–138; sequence LIKLDPSNIV…IDSAIKVMFV (135 aa). ANK repeat units follow at residues 176–205, 209–238, 242–271, 275–304, 309–338, 342–372, 374–392, 396–425, 429–458, and 462–491; these read QGQT…DIEA, VGST…NTEG, SVFR…RVDS, DGNT…RTDV, EGDT…TKYV, LGKT…CAAA, KGEV…VING, NGWT…DLDA, DGYT…DVEA, and KGVS…SREG.

Interacts with EX70I at the periarbuscular membrane (PAM) around the arbuscule hyphal tips. Expressed in roots.

It is found in the cytoplasm. The protein localises to the nucleus. It localises to the cell membrane. Required for arbuscular mycorrhizal (AM) symbiosis with AM fungi (e.g. Glomus versiforme and Gigaspora gigantea) both during fungal passage across root epidermis and for arbuscule formation in cortical cells; this symbiosis promotes phosphorus (P) and copper (Cu) uptake. Essential for infection by symbiotic nitrogen-fixing rhizobial bacteria (e.g. Sinorhizobium meliloti) leading to the formation of root nodules. The protein is Protein VAPYRIN of Medicago truncatula (Barrel medic).